Reading from the N-terminus, the 337-residue chain is Eukaryotic translation initiation factor 3 subunit H (337 aa).

An MPN domain is found at 21 to 153 (VQCDGLAVMK…LKAYRLTPQA (133 aa)).

The protein belongs to the eIF-3 subunit H family. Component of the eukaryotic translation initiation factor 3 (eIF-3) complex. The eIF-3 complex interacts with pix. Interacts with mxt.

It is found in the cytoplasm. Functionally, component of the eukaryotic translation initiation factor 3 (eIF-3) complex, which is involved in protein synthesis of a specialized repertoire of mRNAs and, together with other initiation factors, stimulates binding of mRNA and methionyl-tRNAi to the 40S ribosome. The eIF-3 complex specifically targets and initiates translation of a subset of mRNAs involved in cell proliferation. The protein is Eukaryotic translation initiation factor 3 subunit H of Drosophila willistoni (Fruit fly).